The sequence spans 389 residues: Glutamate 5-kinase (389 aa).

Lys16 contributes to the ATP binding site. Residues Ser56, Asp143, and Asn155 each contribute to the substrate site. 175-176 serves as a coordination point for ATP; that stretch reads SD. The PUA domain maps to 281 to 358; that stretch reads AGGLHVDDGA…AEIEAILGYP (78 aa).

It belongs to the glutamate 5-kinase family.

Its subcellular location is the cytoplasm. It carries out the reaction L-glutamate + ATP = L-glutamyl 5-phosphate + ADP. It participates in amino-acid biosynthesis; L-proline biosynthesis; L-glutamate 5-semialdehyde from L-glutamate: step 1/2. Functionally, catalyzes the transfer of a phosphate group to glutamate to form L-glutamate 5-phosphate. The protein is Glutamate 5-kinase of Rhizobium leguminosarum bv. trifolii (strain WSM2304).